A 396-amino-acid chain; its full sequence is MSSAALMEEIRNAQRAEGPATILAIGTATPANCVIQADYPDFYFRITNSEHKTELKEKFQRMCDKSMIKKRYMHLTEDLLKENPKMCEYMAPSLDARQDMVVVEIRKLGKEAAVKAIKEWGQPKSKITHLVFCTTSGVDMPGADYQLTKLLGLRPSVKRLMMYQQGCFPGGTVLRLAKDLAENNRGARVLVVCSEITAVTFRGPSDTHLDSLVGQALFGDGAAALIVGADPDTAIERPLFELVSAAQTILPDSDGAIDGHLREVGLTFHLLKDVPGLISKNIEKSLIEAFKPIGINDWNSIFWIAHPGGPAILDQVEHKLAPGRRANSRATRHILSEYGNMSSACVLFILDEMRKKSARRREATTGDGLEWGVLFGFGPGLTVETVVLHSVPAITA.

The active site involves C167.

This sequence belongs to the thiolase-like superfamily. Chalcone/stilbene synthases family.

The enzyme catalyses (E)-4-coumaroyl-CoA + 3 malonyl-CoA + 3 H(+) = 2',4,4',6'-tetrahydroxychalcone + 3 CO2 + 4 CoA. It functions in the pathway secondary metabolite biosynthesis; flavonoid biosynthesis. In terms of biological role, the primary product of this enzyme is 4,2',4',6'-tetrahydroxychalcone (also termed naringenin-chalcone or chalcone) which can under specific conditions spontaneously isomerize into naringenin. The sequence is that of Chalcone synthase (CHS) from Chrysosplenium americanum (American golden saxifrage).